The primary structure comprises 749 residues: Amyloid-beta A4 precursor protein-binding family A member 2 (749 aa).

Disordered stretches follow at residues 1–94 (MAHR…PEEE), 130–220 (DTDE…GDLE), and 238–344 (SMTS…NIPE). Ser-11 is modified (phosphoserine). Over residues 70–80 (GDSSSDYVNNT) the composition is skewed to polar residues. Acidic residues-rich tracts occupy residues 81–94 (SEEE…PEEE) and 131–142 (TDECQEAVEEWT). The tract at residues 185-270 (HYCASKEGYQ…SVEACPPIKA (86 aa)) is STXBP1-binding. Position 208 is a phosphoserine (Ser-208). Residues 238 to 247 (SMTSITSASE) are compositionally biased toward polar residues. Residues 305-315 (RTPEERLKWPH) are compositionally biased toward basic and acidic residues. The PID domain maps to 368–555 (DGIIFAANYL…IINTQEMYND (188 aa)). PDZ domains are found at residues 568–654 (ELQL…IVSC) and 659–734 (TVLI…TMPA).

As to quaternary structure, part of a multimeric complex containing STXBP1 and syntaxin-1. Binds to the cytoplasmic domain of amyloid-beta protein, and to the nuclear factor NF-kappa-B/p65 via its PDZ domain. Interacts with the N-terminal domain of NECAB3. In terms of tissue distribution, brain.

Its function is as follows. Putative function in synaptic vesicle exocytosis by binding to STXBP1, an essential component of the synaptic vesicle exocytotic machinery. May modulate processing of the amyloid-beta precursor protein (APP) and hence formation of APP-beta. In Homo sapiens (Human), this protein is Amyloid-beta A4 precursor protein-binding family A member 2 (APBA2).